The sequence spans 165 residues: Sporulation-specific cell division protein SsgB (165 aa).

The segment at 1–21 (MLVGNSWTRSLEPVSGHEHTE) is disordered.

Belongs to the SsgA family. Interacts with SsgA. Interacts with FtsZ (via N-terminus).

Its subcellular location is the cell septum. Its function is as follows. Involved in sporulation-specific cell division. Required for early stages of sporulation. Important in the process of growth cessation prior to sporulation-specific cell division. Recruits cell division protein FtsZ to the future septum sites and tethers the contractile ring structure (Z ring) to the cytoplasmic membrane during sporulation. Stimulates polymerization and filament length of FtsZ in vitro. The protein is Sporulation-specific cell division protein SsgB of Kineococcus radiotolerans (strain ATCC BAA-149 / DSM 14245 / SRS30216).